The following is a 340-amino-acid chain: MAVQMEYEKDVKVPALDGKKIAVIGYGSQGHAHSQNLRDTGHDVIIGVRPGKSFDKAKEDGFDTYTVAEATKLADVIMILAPDEIQQELYEAEIAPNLEAGNAVGFAHGFNIHFEFIKVPADVDVFMCAPKGPGHLVRRTFEEGFGVPALYAVYQDATGNAKDIAMDWCKGIGAARVGLLETTYKEETEEDLFGEQAVLCGGLTALIETGFEVLTEAGYAPELAYFEVLHEMKLIVDLIYEGGFKKMRQSISNTAEFGDYVSGPRVITEQVKENMKAVLTDIQNGKFANDFVNDYKAGRPKLTAYREEAANLEIEKVGAELRKAMPFVGQNDDDAFKIYN.

Residues 3–182 (VQMEYEKDVK…GAARVGLLET (180 aa)) enclose the KARI N-terminal Rossmann domain. NADP(+)-binding positions include 26–29 (YGSQ), Arg49, Ser53, and 83–86 (DEIQ). Residue His108 is part of the active site. Gly134 provides a ligand contact to NADP(+). Positions 183–328 (TYKEETEEDL…AELRKAMPFV (146 aa)) constitute a KARI C-terminal knotted domain. Mg(2+) contacts are provided by Asp191, Glu195, Glu227, and Glu231. Ser252 is a binding site for substrate.

This sequence belongs to the ketol-acid reductoisomerase family. The cofactor is Mg(2+).

It carries out the reaction (2R)-2,3-dihydroxy-3-methylbutanoate + NADP(+) = (2S)-2-acetolactate + NADPH + H(+). It catalyses the reaction (2R,3R)-2,3-dihydroxy-3-methylpentanoate + NADP(+) = (S)-2-ethyl-2-hydroxy-3-oxobutanoate + NADPH + H(+). Its pathway is amino-acid biosynthesis; L-isoleucine biosynthesis; L-isoleucine from 2-oxobutanoate: step 2/4. It functions in the pathway amino-acid biosynthesis; L-valine biosynthesis; L-valine from pyruvate: step 2/4. Functionally, involved in the biosynthesis of branched-chain amino acids (BCAA). Catalyzes an alkyl-migration followed by a ketol-acid reduction of (S)-2-acetolactate (S2AL) to yield (R)-2,3-dihydroxy-isovalerate. In the isomerase reaction, S2AL is rearranged via a Mg-dependent methyl migration to produce 3-hydroxy-3-methyl-2-ketobutyrate (HMKB). In the reductase reaction, this 2-ketoacid undergoes a metal-dependent reduction by NADPH to yield (R)-2,3-dihydroxy-isovalerate. In Streptococcus thermophilus (strain CNRZ 1066), this protein is Ketol-acid reductoisomerase (NADP(+)).